We begin with the raw amino-acid sequence, 262 residues long: Ornithine carbamoyltransferase (262 aa).

Carbamoyl phosphate-binding positions include 3–7, Gln-30, Arg-54, and 81–84; these read STRTR and HPTQ. L-ornithine-binding positions include Asn-114, Asp-178, and 182-183; that span reads SM. Carbamoyl phosphate is bound by residues 219 to 222 and Thr-247; that span reads HCLP.

It belongs to the aspartate/ornithine carbamoyltransferase superfamily. OTCase family.

The protein resides in the cytoplasm. It catalyses the reaction carbamoyl phosphate + L-ornithine = L-citrulline + phosphate + H(+). Its pathway is amino-acid biosynthesis; L-arginine biosynthesis; L-arginine from L-ornithine and carbamoyl phosphate: step 1/3. It functions in the pathway amino-acid degradation; L-arginine degradation via ADI pathway; carbamoyl phosphate from L-arginine: step 2/2. Functionally, reversibly catalyzes the transfer of the carbamoyl group from carbamoyl phosphate (CP) to the N(epsilon) atom of ornithine (ORN) to produce L-citrulline. This Neisseria meningitidis protein is Ornithine carbamoyltransferase (argF).